Reading from the N-terminus, the 340-residue chain is Adenosine kinase (340 aa).

Aspartate 293 is a catalytic residue.

The protein belongs to the carbohydrate kinase PfkB family. Mg(2+) is required as a cofactor.

It carries out the reaction adenosine + ATP = AMP + ADP + H(+). It functions in the pathway purine metabolism; AMP biosynthesis via salvage pathway; AMP from adenosine: step 1/1. ATP dependent phosphorylation of adenosine and other related nucleoside analogs to monophosphate derivatives. ADO1 does not play a major role in adenine utilization in yeast. Its physiological role could primarily be to recycle adenosine produced by the methyl cycle. This Saccharomyces cerevisiae (strain ATCC 204508 / S288c) (Baker's yeast) protein is Adenosine kinase.